Consider the following 547-residue polypeptide: Glucose-6-phosphate isomerase 2 (547 aa).

Glu351 (proton donor) is an active-site residue. Active-site residues include His382 and Lys508.

It belongs to the GPI family.

Its subcellular location is the cytoplasm. The enzyme catalyses alpha-D-glucose 6-phosphate = beta-D-fructose 6-phosphate. The protein operates within carbohydrate biosynthesis; gluconeogenesis. It functions in the pathway carbohydrate degradation; glycolysis; D-glyceraldehyde 3-phosphate and glycerone phosphate from D-glucose: step 2/4. Functionally, catalyzes the reversible isomerization of glucose-6-phosphate to fructose-6-phosphate. The sequence is that of Glucose-6-phosphate isomerase 2 from Neisseria gonorrhoeae (strain ATCC 700825 / FA 1090).